We begin with the raw amino-acid sequence, 296 residues long: MSTRYLSGSAVALVTPFKKDMTVDTDALRRLVQFQIAAGTDIIIPCGTTGESPTLSEDEQFDIIRIVKDEVDGKALVAAGAGTNSTPHAVALAKNAVKAGASLLLSVAPYYNKPSQEGIYQHYRHIAEAVTVPIIIYNVPGRTGCNVAASTILRLARDFENIAAVKEATENMSQISELLEERPDHFSVLTGEDSLILPFMAMGGDGVISVAANQIPSQIKQLVEAARLGDLEEARRINRRYRKLLKLNFIESNPVPVKYALSRMGMIEENYRLPLVPLSAENKLLIDQELESLGLI.

T49 serves as a coordination point for pyruvate. Residue Y137 is the Proton donor/acceptor of the active site. K166 (schiff-base intermediate with substrate) is an active-site residue. Pyruvate is bound at residue I208.

This sequence belongs to the DapA family. In terms of assembly, homotetramer; dimer of dimers.

It is found in the cytoplasm. It carries out the reaction L-aspartate 4-semialdehyde + pyruvate = (2S,4S)-4-hydroxy-2,3,4,5-tetrahydrodipicolinate + H2O + H(+). It functions in the pathway amino-acid biosynthesis; L-lysine biosynthesis via DAP pathway; (S)-tetrahydrodipicolinate from L-aspartate: step 3/4. Functionally, catalyzes the condensation of (S)-aspartate-beta-semialdehyde [(S)-ASA] and pyruvate to 4-hydroxy-tetrahydrodipicolinate (HTPA). This is 4-hydroxy-tetrahydrodipicolinate synthase from Pelodictyon phaeoclathratiforme (strain DSM 5477 / BU-1).